Here is a 623-residue protein sequence, read N- to C-terminus: GATA zinc finger domain-containing protein 6 (623 aa).

Disordered stretches follow at residues Ile-137–Phe-156, Ile-167–Thr-197, and Pro-245–Thr-289. The span at Ile-167 to Asn-179 shows a compositional bias: low complexity. Polar residues predominate over residues Lys-185–Thr-197. A GATA-type zinc finger spans residues Cys-320–Cys-345. The interval Ile-398–Asn-509 is disordered. Residues Leu-410–Leu-482 are compositionally biased toward low complexity. Positions Asn-483 to Asn-502 are enriched in polar residues.

This chain is GATA zinc finger domain-containing protein 6 (gtaF), found in Dictyostelium discoideum (Social amoeba).